Reading from the N-terminus, the 334-residue chain is Biotin synthase (334 aa).

A Radical SAM core domain is found at 55–280 (EEIEVEGIIS…HTMLRFAGGR (226 aa)). Positions 70, 74, and 77 each coordinate [4Fe-4S] cluster. The [2Fe-2S] cluster site is built by cysteine 113, cysteine 205, and arginine 275.

It belongs to the radical SAM superfamily. Biotin synthase family. As to quaternary structure, homodimer. It depends on [4Fe-4S] cluster as a cofactor. Requires [2Fe-2S] cluster as cofactor.

The enzyme catalyses (4R,5S)-dethiobiotin + (sulfur carrier)-SH + 2 reduced [2Fe-2S]-[ferredoxin] + 2 S-adenosyl-L-methionine = (sulfur carrier)-H + biotin + 2 5'-deoxyadenosine + 2 L-methionine + 2 oxidized [2Fe-2S]-[ferredoxin]. It participates in cofactor biosynthesis; biotin biosynthesis; biotin from 7,8-diaminononanoate: step 2/2. Functionally, catalyzes the conversion of dethiobiotin (DTB) to biotin by the insertion of a sulfur atom into dethiobiotin via a radical-based mechanism. The chain is Biotin synthase from Corynebacterium glutamicum (strain R).